The primary structure comprises 359 residues: EGF-like domain containing protein 2 (359 aa).

An N-terminal signal peptide occupies residues 1-20 (MPPFISHFFLLSTFASLALC). EGF-like domains follow at residues 21-55 (SFYCKNPGYPCLNGGTCLYNGECNCTSGFRGFNCG) and 61-93 (ISAACTVECHNKGICYNGDKCYCTKDYMGPTCQ). 6 disulfide bridges follow: cysteine 24–cysteine 37, cysteine 31–cysteine 43, cysteine 45–cysteine 54, cysteine 65–cysteine 75, cysteine 69–cysteine 81, and cysteine 83–cysteine 92.

In terms of tissue distribution, prismatic layer of shell (at protein level). Expressed primarily in the mantle with highest level in the mantle edge and lower level in the mantle pallium.

It is found in the secreted. This Margaritifera margaritifera (Freshwater pearl mussel) protein is EGF-like domain containing protein 2.